Reading from the N-terminus, the 199-residue chain is Recombination protein RecR (199 aa).

A C4-type zinc finger spans residues Cys-57–Cys-72. The 95-residue stretch at Ser-80–Pro-174 folds into the Toprim domain.

This sequence belongs to the RecR family.

In terms of biological role, may play a role in DNA repair. It seems to be involved in an RecBC-independent recombinational process of DNA repair. It may act with RecF and RecO. The protein is Recombination protein RecR of Acidithiobacillus ferrooxidans (strain ATCC 23270 / DSM 14882 / CIP 104768 / NCIMB 8455) (Ferrobacillus ferrooxidans (strain ATCC 23270)).